A 176-amino-acid polypeptide reads, in one-letter code: ATP-dependent protease subunit HslV (176 aa).

Thr-4 is an active-site residue. The Na(+) site is built by Ala-159, Cys-162, and Thr-165.

The protein belongs to the peptidase T1B family. HslV subfamily. As to quaternary structure, a double ring-shaped homohexamer of HslV is capped on each side by a ring-shaped HslU homohexamer. The assembly of the HslU/HslV complex is dependent on binding of ATP.

The protein resides in the cytoplasm. It catalyses the reaction ATP-dependent cleavage of peptide bonds with broad specificity.. Allosterically activated by HslU binding. In terms of biological role, protease subunit of a proteasome-like degradation complex believed to be a general protein degrading machinery. The polypeptide is ATP-dependent protease subunit HslV (Wolbachia sp. subsp. Brugia malayi (strain TRS)).